A 353-amino-acid chain; its full sequence is Phospho-N-acetylmuramoyl-pentapeptide-transferase (353 aa).

10 helical membrane-spanning segments follow: residues 22-42 (FAFF…ITWA), 65-85 (TPTM…LSCI), 88-108 (DNIF…IGLI), 129-149 (LLTQ…SSEL), 161-181 (PLFD…ISSS), 192-212 (GLAT…LYLS), 228-248 (GLGE…GFLW), 256-276 (VFMG…LAII), 281-301 (ILLL…ILQV), and 330-350 (KIIV…LASI).

It belongs to the glycosyltransferase 4 family. MraY subfamily. It depends on Mg(2+) as a cofactor.

It localises to the cell inner membrane. The enzyme catalyses UDP-N-acetyl-alpha-D-muramoyl-L-alanyl-gamma-D-glutamyl-meso-2,6-diaminopimeloyl-D-alanyl-D-alanine + di-trans,octa-cis-undecaprenyl phosphate = di-trans,octa-cis-undecaprenyl diphospho-N-acetyl-alpha-D-muramoyl-L-alanyl-D-glutamyl-meso-2,6-diaminopimeloyl-D-alanyl-D-alanine + UMP. It participates in cell wall biogenesis; peptidoglycan biosynthesis. Its function is as follows. Catalyzes the initial step of the lipid cycle reactions in the biosynthesis of the cell wall peptidoglycan: transfers peptidoglycan precursor phospho-MurNAc-pentapeptide from UDP-MurNAc-pentapeptide onto the lipid carrier undecaprenyl phosphate, yielding undecaprenyl-pyrophosphoryl-MurNAc-pentapeptide, known as lipid I. The protein is Phospho-N-acetylmuramoyl-pentapeptide-transferase of Campylobacter jejuni subsp. jejuni serotype O:23/36 (strain 81-176).